The primary structure comprises 309 residues: ATP synthase gamma chain (309 aa).

It belongs to the ATPase gamma chain family. In terms of assembly, F-type ATPases have 2 components, CF(1) - the catalytic core - and CF(0) - the membrane proton channel. CF(1) has five subunits: alpha(3), beta(3), gamma(1), delta(1), epsilon(1). CF(0) has three main subunits: a, b and c.

Its subcellular location is the cell membrane. Its function is as follows. Produces ATP from ADP in the presence of a proton gradient across the membrane. The gamma chain is believed to be important in regulating ATPase activity and the flow of protons through the CF(0) complex. This chain is ATP synthase gamma chain, found in Salinispora arenicola (strain CNS-205).